A 341-amino-acid polypeptide reads, in one-letter code: N-acetyl-gamma-glutamyl-phosphate reductase 2 (341 aa).

Cys146 is a catalytic residue.

This sequence belongs to the NAGSA dehydrogenase family. Type 1 subfamily.

It is found in the cytoplasm. It catalyses the reaction N-acetyl-L-glutamate 5-semialdehyde + phosphate + NADP(+) = N-acetyl-L-glutamyl 5-phosphate + NADPH + H(+). It functions in the pathway amino-acid biosynthesis; L-arginine biosynthesis; N(2)-acetyl-L-ornithine from L-glutamate: step 3/4. Its function is as follows. Catalyzes the NADPH-dependent reduction of N-acetyl-5-glutamyl phosphate to yield N-acetyl-L-glutamate 5-semialdehyde. The protein is N-acetyl-gamma-glutamyl-phosphate reductase 2 of Lactiplantibacillus plantarum (strain ATCC BAA-793 / NCIMB 8826 / WCFS1) (Lactobacillus plantarum).